The sequence spans 545 residues: Methionine--tRNA ligase (545 aa).

The 'HIGH' region signature appears at 10–20 (PYANGSLHIGH). 4 residues coordinate Zn(2+): Cys141, Cys144, Cys153, and Cys156. Residues 329–333 (KISTS) carry the 'KMSKS' region motif. An ATP-binding site is contributed by Thr332.

It belongs to the class-I aminoacyl-tRNA synthetase family. MetG type 1 subfamily. As to quaternary structure, monomer. It depends on Zn(2+) as a cofactor.

The protein resides in the cytoplasm. The enzyme catalyses tRNA(Met) + L-methionine + ATP = L-methionyl-tRNA(Met) + AMP + diphosphate. In terms of biological role, is required not only for elongation of protein synthesis but also for the initiation of all mRNA translation through initiator tRNA(fMet) aminoacylation. The chain is Methionine--tRNA ligase from Streptococcus pneumoniae (strain 70585).